Consider the following 293-residue polypeptide: Oxidoreductase R2 (293 aa).

The protein belongs to the asaB hydroxylase/desaturase family.

Its pathway is secondary metabolite biosynthesis. Oxidoreductase; part of the gene cluster that mediates the biosynthesis of squalestatin S1 (SQS1, also known as zaragozic acid A), a heavily oxidized fungal polyketide that offers potent cholesterol lowering activity by targeting squalene synthase (SS). SQS1 is composed of a 2,8-dioxobicyclic[3.2.1]octane-3,4,5-tricarboxyclic acid core that is connected to two lipophilic polyketide arms. These initial steps feature the priming of an unusual benzoic acid starter unit onto the highly reducing polyketide synthase pks2, followed by oxaloacetate extension and product release to generate a tricarboxylic acid containing product. The phenylalanine ammonia lyase (PAL) M7 and the acyl-CoA ligase M9 are involved in transforming phenylalanine into benzoyl-CoA. The citrate synthase-like protein R3 is involved in connecting the C-alpha-carbons of the hexaketide chain and oxaloacetate to afford the tricarboxylic acid unit. The potential hydrolytic enzymes, M8 and M10, are in close proximity to pks2 and may participate in product release. On the other side, the tetraketide arm is synthesized by a the squalestatin tetraketide synthase pks1 and enzymatically esterified to the core in the last biosynthetic step, by the acetyltransferase M4. The biosynthesis of the tetraketide must involve 3 rounds of chain extension. After the first and second rounds methyl-transfer occurs, and in all rounds of extension the ketoreductase and dehydratase are active. The enoyl reductase and C-MeT of pks1 are not active in the final round of extension. The acetyltransferase M4 appears to have a broad substrate selectivity for its acyl CoA substrate, allowing the in vitro synthesis of novel squalestatins. The biosynthesis of SQS1 requires several oxidative steps likely performed by oxidoreductases M1, R1 and R2. Finally, in support of the identification of the cluster as being responsible for SQS1 production, the cluster contains a gene encoding a putative squalene synthase (SS) R6, suggesting a likely mechanism for self-resistance. The protein is Oxidoreductase R2 of Phoma sp. (strain ATCC 20986 / MF5453).